Consider the following 1287-residue polypeptide: Cell adhesion molecule-related/down-regulated by oncogenes (1287 aa).

Positions 1 to 25 are cleaved as a signal peptide; the sequence is MHPDLGPLCTLLYVTLTILCSSVSS. The Extracellular portion of the chain corresponds to 26-963; the sequence is DLAPYFTSEP…PATSPARSSD (938 aa). Ig-like C2-type domains lie at 29-114, 120-204, 225-303, 310-396, and 405-516; these read PYFT…ATVS, DFGS…LKVE, PTHS…KYVT, EHAS…GRLE, and PVII…ASLM. Cys-50 and Cys-97 form a disulfide bridge. Asn-88, Asn-100, Asn-180, Asn-287, Asn-294, Asn-342, and Asn-427 each carry an N-linked (GlcNAc...) asparagine glycan. Disulfide bonds link Cys-141–Cys-191 and Cys-243–Cys-290. Intrachain disulfides connect Cys-333/Cys-380 and Cys-426/Cys-500. The interval 531-553 is disordered; sequence LPDAAQNDDRSKRDGSETGLLSS. A compositionally biased stretch (basic and acidic residues) spans 537–546; the sequence is NDDRSKRDGS. N-linked (GlcNAc...) asparagine glycosylation is present at Asn-570. Fibronectin type-III domains follow at residues 579–677, 723–821, and 826–926; these read APII…SKEK, APDR…FPNR, and PITG…TKVK. An N-linked (GlcNAc...) asparagine glycan is attached at Asn-873. A disordered region spans residues 933–955; sequence EYPVKDLSTPPNSLGSGGNVGPA. A helical membrane pass occupies residues 964-984; that stretch reads MLYLIVGCVLGVMVLILMVFI. Residues 985-1287 lie on the Cytoplasmic side of the membrane; that stretch reads AMCLWKNRQQ…TEVLQQPRET (303 aa). Residues 1268-1287 form a disordered region; it reads SPPGIPLDSPTEVLQQPRET.

Part of a complex that contains BOC, CDON, NEO1, cadherins and CTNNB1. Interacts with NTN3. Interacts with PTCH1. Interacts with GAS1. Interacts with DHH, IHH and SHH. N-glycosylated.

The protein localises to the cell membrane. Its function is as follows. Component of a cell-surface receptor complex that mediates cell-cell interactions between muscle precursor cells. Promotes differentiation of myogenic cells. This Homo sapiens (Human) protein is Cell adhesion molecule-related/down-regulated by oncogenes (CDON).